Consider the following 345-residue polypeptide: Telomere-binding protein cav (345 aa).

Positions 115 to 337 (RRKMVQPYPE…TITFQNTESE (223 aa)) are required for binding to Su(var)205. 2 disordered regions span residues 145–180 (RLDR…HEDQ) and 200–231 (PPGV…INRP). Short sequence motifs (su(var)205-binding Pro-containing repeat) lie at residues 231–237 (PETEINE) and 298–304 (PETEMNE).

In terms of assembly, component of the HipHop-HOAP telomere capping complex, composed of at least HipHop and cav/HOAP, and may include Su(var)205/HP1; HipHop and cav/HOAP, but not Su(var)205, are interdependent for their protein stability. Interacts with HipHop (via N-terminus). Interacts (via C-terminus) with Su(var)205/HP1 dimer (via hinge and chromoshadow domain) and Orc1; possibly interacts with other components of the origin recognition complex (ORC). Each molecule of cav/HOAP interacts with 2 molecules of Su(var)205/HP1. The HipHop-HOAP complex recruits the MTV complex, consisting of moi/modigliani, tea and ver/verrocchio, to telomeres, forming the terminin telomere-capping complex. Interacts with moi/modigliani; the interaction is direct. Interacts with ver/verrochio; the interaction is direct. Interacts with HP6, which is also part of the terminin complex. Interacts (via N-terminus) with peo/pendolino (via N-terminus); the interaction is direct.

It is found in the nucleus. The protein resides in the chromosome. It localises to the telomere. Functionally, part of the HipHop-HOAP complex that recruits the MTV complex to form the terminin telomere-capping complex, which binds to chromosome ends in a sequence-independent manner and prevents telomere fusion. Telomere capping is independent of the origin recognition complex (ORC). The polypeptide is Telomere-binding protein cav (Drosophila melanogaster (Fruit fly)).